Consider the following 395-residue polypeptide: Cation channel sperm-associated protein 3 (395 aa).

The Cytoplasmic segment spans residues 1–48 (MSQHFHHNPVRVKSGSLFATASEALQARLSKIKRKDKECQAYFRKVIK). The chain crosses the membrane as a helical span at residues 49-71 (STFFQIVMITTVTTNSFLLVLGT). Residues 72–80 (NYDIQFEFF) are Extracellular-facing. The chain crosses the membrane as a helical span at residues 81–107 (RTFEVSELFFVSVYVCEFLMKVYVDPI). Residue T108 is a topological domain, cytoplasmic. Residues 109–131 (YWKDGYNILDVIILIILTIPYLL) traverse the membrane as a helical segment. Residues 132–143 (RKIKGNHSAYLH) are Extracellular-facing. The chain crosses the membrane as a helical span at residues 144 to 160 (FADGIQSLRILKLISYS). Over 161–168 (RGIRTLII) the chain is Cytoplasmic. The helical transmembrane segment at 169–195 (AVGETVYTVASVLTLLFLLMFVFAILG) threads the bilayer. Residues 196 to 216 (FCLFGVTDRGDLENWGNLASA) lie on the Extracellular side of the membrane. The helical; Pore-forming intramembrane region spans 217 to 236 (FFTLFSLATVDGWTDLQEEL). Residues 237–242 (DKRKFT) are Extracellular-facing. Residues 243 to 268 (VSRAFTILFILLASFIFLNMFVGVMI) traverse the membrane as a helical segment. At 269–395 (MHTEDSMKKF…ESSSSLSGLS (127 aa)) the chain is on the cytoplasmic side.

This sequence belongs to the cation channel sperm-associated (TC 1.A.1.19) family. As to quaternary structure, component of the CatSper complex or CatSpermasome composed of the core pore-forming members CATSPER1, CATSPER2, CATSPER3 and CATSPER4 as well as auxiliary members CATSPERB, CATSPERG2, CATSPERD, CATSPERE, CATSPERZ, C2CD6/CATSPERT, SLCO6C1, TMEM249, TMEM262 and EFCAB9. HSPA1 may be an additional auxiliary complex member. The core complex members CATSPER1, CATSPER2, CATSPER3 and CATSPER4 form a heterotetrameric channel. The auxiliary CATSPERB, CATSPERG2, CATSPERD and CATSPERE subunits form a pavilion-like structure over the pore which stabilizes the complex through interactions with CATSPER4, CATSPER3, CATSPER1 and CATSPER2 respectively. SLCO6C1 interacts with CATSPERE and TMEM262/CATSPERH interacts with CATSPERB, further stabilizing the complex. C2CD6/CATSPERT interacts at least with CATSPERD and is required for targeting the CatSper complex in the flagellar membrane. In terms of tissue distribution, testis-specific.

It localises to the cell projection. Its subcellular location is the cilium. The protein resides in the flagellum membrane. It carries out the reaction Ca(2+)(in) = Ca(2+)(out). Its activity is regulated as follows. In contrast to the human ortholog, not activated by progesterone. Activated by intracellular alkalinization. In terms of biological role, pore-forming subunit of the CatSper complex, a sperm-specific voltage-gated calcium channel that plays a central role in sperm cell hyperactivation. Controls calcium entry to mediate the hyperactivated motility, a step needed for sperm motility which is essential late in the preparation of sperm for fertilization. This Mus musculus (Mouse) protein is Cation channel sperm-associated protein 3 (Catsper3).